We begin with the raw amino-acid sequence, 144 residues long: Tail fiber protein R (144 aa).

Its function is as follows. Structural or assembly protein of tail fibers. The polypeptide is Tail fiber protein R (R) (Enterobacteriaceae (Bacteriophage P1)).